The following is a 218-amino-acid chain: Putative transposase InsD for insertion element IS2E (218 aa).

The Integrase catalytic domain maps to 23-206 (KPAVPPSKRA…SPREYLRQRA (184 aa)).

In terms of biological role, involved in the transposition of the insertion sequence IS2. The sequence is that of Putative transposase InsD for insertion element IS2E (insD8) from Escherichia coli (strain K12).